A 246-amino-acid polypeptide reads, in one-letter code: Zinc import ATP-binding protein ZnuC (246 aa).

Residues 24 to 243 (LKIENLALAY…RTLNEIFSSY (220 aa)) form the ABC transporter domain. Residue 56–63 (GPNGGGKT) coordinates ATP.

The protein belongs to the ABC transporter superfamily. Zinc importer (TC 3.A.1.15.5) family. The complex is composed of two ATP-binding proteins (ZnuC), two transmembrane proteins (ZnuB) and a solute-binding protein (ZnuA).

The protein resides in the cell membrane. It carries out the reaction Zn(2+)(out) + ATP(in) + H2O(in) = Zn(2+)(in) + ADP(in) + phosphate(in) + H(+)(in). Functionally, part of the ABC transporter complex ZnuABC involved in zinc import. Responsible for energy coupling to the transport system. In Wolbachia pipientis wMel, this protein is Zinc import ATP-binding protein ZnuC.